The following is a 365-amino-acid chain: Popy Class I histocompatibility antigen, A-1 alpha chain (365 aa).

Positions 1-24 are cleaved as a signal peptide; sequence MAIMAPRTLLLLLSGALALTQTWA. Residues 25-114 form an alpha-1 region; it reads GSHSMRYFST…LRGYYNQSDG (90 aa). At 25 to 308 the chain is on the extracellular side; it reads GSHSMRYFST…ELSSQPTIPI (284 aa). Asparagine 110 is a glycosylation site (N-linked (GlcNAc...) asparagine). Positions 115 to 206 are alpha-2; the sequence is GSHTIQRMFG…ENGKETLQRT (92 aa). 2 disulfides stabilise this stretch: cysteine 125–cysteine 188 and cysteine 227–cysteine 283. The tract at residues 207-298 is alpha-3; sequence DAPKTHMTHH…GLPEPLTLRW (92 aa). Positions 209-297 constitute an Ig-like C1-type domain; that stretch reads PKTHMTHHPV…EGLPEPLTLR (89 aa). Residues 299-308 are connecting peptide; sequence ELSSQPTIPI. Residues 309–332 form a helical membrane-spanning segment; the sequence is VGIIAGLVLLGAVITGAVVAAVMW. Topologically, residues 333 to 365 are cytoplasmic; sequence RRRNSDRKGGSYSQAASNDSAQGSDVSLTACKV. The interval 340-365 is disordered; that stretch reads KGGSYSQAASNDSAQGSDVSLTACKV. Serine 343 bears the Phosphoserine mark. The span at 343–359 shows a compositional bias: polar residues; that stretch reads SYSQAASNDSAQGSDVS. Phosphotyrosine is present on tyrosine 344. Phosphoserine is present on residues serine 345, serine 349, serine 352, serine 356, and serine 359.

Belongs to the MHC class I family. In terms of assembly, heterodimer of an alpha chain and a beta chain (beta-2-microglobulin).

Its subcellular location is the membrane. Its function is as follows. Involved in the presentation of foreign antigens to the immune system. The sequence is that of Popy Class I histocompatibility antigen, A-1 alpha chain from Pongo pygmaeus (Bornean orangutan).